Reading from the N-terminus, the 391-residue chain is IKKEGLWIPKLEPERVVSILEWDRAAEPEHRLEAICASMIEAWGYDDLLNHIRRFYLWVLDQAPYKQLSAEGKAPYISEVALKSLYTGKPATSCELEVYNKIHQEQHDEFDDSQMKFVFQSDKEKLNVGEQQKSKDKESRQRDQEGENSNRQIIPDRDINAGTTGTFSVPKLKKISGKLSLPKIKGKGLLNLDHLLVYVPNQDDISNNIATQEQLEAWHEGVKNAYEVDDQQMEIICNGLMVWCIENGTSGDLQGEWTMMDGEKQVTFPLKPILDFAKPTLRQIMAHFSQAAESYIEFRNSTEKYMPRYGLQRNLTDYGLARYAFDFYRLTSKTPARAREAHMQMKAAAIRGKSNHMFGLDGNVGTDEENTERHTANDVNRNMHHIAGARF.

A compositionally biased stretch (basic and acidic residues) spans Asn-127–Glu-145. A disordered region spans residues Asn-127–Gly-165.

The protein belongs to the potyviridae genome polyprotein family. Genome polyprotein of potyviruses undergoes post-translational proteolytic processing by the main proteinase NIa-pro resulting in the production of at least ten individual proteins. The P1 proteinase and the HC-pro cleave only their respective C-termini autocatalytically. 6K1 is essential for proper proteolytic separation of P3 from CI.

It is found in the virion. It carries out the reaction RNA(n) + a ribonucleoside 5'-triphosphate = RNA(n+1) + diphosphate. In terms of biological role, an RNA-dependent RNA polymerase that plays an essential role in the virus replication. Involved in aphid transmission, cell-to-cell and systemis movement, encapsidation of the viral RNA and in the regulation of viral RNA amplification. The protein is Genome polyprotein of Clover yellow vein virus.